The following is a 425-amino-acid chain: Sucrose-phosphatase 2 (425 aa).

Belongs to the sucrose phosphatase family. As to quaternary structure, homodimer. Mg(2+) is required as a cofactor.

The catalysed reaction is sucrose 6(F)-phosphate + H2O = sucrose + phosphate. Its pathway is glycan biosynthesis; sucrose biosynthesis; sucrose from D-fructose 6-phosphate and UDP-alpha-D-glucose: step 2/2. Its activity is regulated as follows. Inhibited by EDTA. Catalyzes the final step of sucrose synthesis. This chain is Sucrose-phosphatase 2 (SPP2), found in Nicotiana tabacum (Common tobacco).